The sequence spans 434 residues: UDP-N-acetylglucosamine 1-carboxyvinyltransferase (434 aa).

34 to 35 contacts phosphoenolpyruvate; the sequence is KN. Arg104 is a binding site for UDP-N-acetyl-alpha-D-glucosamine. The Proton donor role is filled by Cys128. A 2-(S-cysteinyl)pyruvic acid O-phosphothioketal modification is found at Cys128. Asp319 and Ile341 together coordinate UDP-N-acetyl-alpha-D-glucosamine.

This sequence belongs to the EPSP synthase family. MurA subfamily.

The protein resides in the cytoplasm. The catalysed reaction is phosphoenolpyruvate + UDP-N-acetyl-alpha-D-glucosamine = UDP-N-acetyl-3-O-(1-carboxyvinyl)-alpha-D-glucosamine + phosphate. Its pathway is cell wall biogenesis; peptidoglycan biosynthesis. Cell wall formation. Adds enolpyruvyl to UDP-N-acetylglucosamine. This Prochlorococcus marinus (strain MIT 9313) protein is UDP-N-acetylglucosamine 1-carboxyvinyltransferase.